The chain runs to 103 residues: Large ribosomal subunit protein bL21 (103 aa).

It belongs to the bacterial ribosomal protein bL21 family. As to quaternary structure, part of the 50S ribosomal subunit. Contacts protein L20.

Functionally, this protein binds to 23S rRNA in the presence of protein L20. The polypeptide is Large ribosomal subunit protein bL21 (Legionella pneumophila (strain Paris)).